The sequence spans 107 residues: ESAT-6-like protein EsxD (107 aa).

This sequence belongs to the WXG100 family. CFP-10 subfamily.

It is found in the secreted. The chain is ESAT-6-like protein EsxD from Mycobacterium tuberculosis (strain ATCC 25618 / H37Rv).